Here is a 771-residue protein sequence, read N- to C-terminus: Endoplasmin homolog (771 aa).

Positions 1–24 (MANSSLLRVVLVALLLLGSVTVSA) are cleaved as a signal peptide. Residues asparagine 63, aspartate 109, and phenylalanine 160 each coordinate ATP. A glycan (N-linked (GlcNAc...) asparagine) is linked at asparagine 63. Positions 254-282 (AATPESAAEERSLDEGAVEEDPDKEGDTQ) are disordered. Residues asparagine 306 and asparagine 402 are each glycosylated (N-linked (GlcNAc...) asparagine). Positions 727 to 771 (ADDSLLPPDDAEYTVSDTETEEEEEQPKVDTNAHEEAETDGEGDL) are disordered. A compositionally biased stretch (basic and acidic residues) spans 752 to 762 (QPKVDTNAHEE). The Prevents secretion from ER motif lies at 768–771 (EGDL).

This sequence belongs to the heat shock protein 90 family. As to quaternary structure, homotetramer.

The protein localises to the endoplasmic reticulum. In terms of biological role, molecular chaperone that functions in the processing and transport of secreted proteins. Required for the synthesis of lipophosphoglycan (LPG), a cell surface glycoconjugate. Necessary for the attachment of the galactosyl residue to the mannose within the phosphoglycan repeats of the nascent LPG chain. Also required for addition of phosphoglycan to acid phosphatase. Not required for normal growth. Has ATPase activity. Binds heparin with micromolar affinity which may facilitate infection of host cells. The protein is Endoplasmin homolog of Leishmania donovani.